The following is a 513-amino-acid chain: Serine/threonine-protein phosphatase T (513 aa).

TPR repeat units follow at residues Ala-12 to Gln-45, Ser-46 to Asn-79, and Ile-80 to Asp-113. The segment at Lys-188–Leu-513 is catalytic. Asp-249, His-251, Asp-278, and Asn-310 together coordinate Mn(2+). The Proton donor/acceptor role is filled by His-311. Positions 359 and 434 each coordinate Mn(2+).

The protein belongs to the PPP phosphatase family. PP-5 (PP-T) subfamily. As to quaternary structure, interacts (via TPR repeats) with HSP82 (via C-terminal MEEVD pentapeptide). Mg(2+) is required as a cofactor. The cofactor is Mn(2+).

The protein resides in the nucleus. It catalyses the reaction O-phospho-L-seryl-[protein] + H2O = L-seryl-[protein] + phosphate. The catalysed reaction is O-phospho-L-threonyl-[protein] + H2O = L-threonyl-[protein] + phosphate. Its activity is regulated as follows. Stimulated by arachidonic acid and other unsaturated fatty acids, and by arachidoyl coenzyme A. In terms of biological role, protein phosphatase that specifically binds to and dephosphorylates the molecular chaperone Hsp90 (HSC82 and HSP82). Dephosphorylation positively regulates the Hsp90 chaperone machinery. This chain is Serine/threonine-protein phosphatase T (PPT1), found in Saccharomyces cerevisiae (strain ATCC 204508 / S288c) (Baker's yeast).